The sequence spans 388 residues: GTPase Obg (388 aa).

The Obg domain occupies 1–159; the sequence is MKFVDEATIR…RSLRLELMLL (159 aa). Residues 160 to 333 enclose the OBG-type G domain; the sequence is ADVGLLGMPN…LALKLLDFID (174 aa). GTP contacts are provided by residues 166–173, 191–195, 213–216, 283–286, and 314–316; these read GMPNAGKS, FTTLV, DIPG, NKAD, and SAY. Positions 173 and 193 each coordinate Mg(2+). The interval 356 to 377 is disordered; the sequence is QNANESVNEDYDDDLDDDDYDD. Acidic residues predominate over residues 362–377; sequence VNEDYDDDLDDDDYDD.

This sequence belongs to the TRAFAC class OBG-HflX-like GTPase superfamily. OBG GTPase family. Monomer. Mg(2+) is required as a cofactor.

The protein localises to the cytoplasm. In terms of biological role, an essential GTPase which binds GTP, GDP and possibly (p)ppGpp with moderate affinity, with high nucleotide exchange rates and a fairly low GTP hydrolysis rate. Plays a role in control of the cell cycle, stress response, ribosome biogenesis and in those bacteria that undergo differentiation, in morphogenesis control. This Shewanella piezotolerans (strain WP3 / JCM 13877) protein is GTPase Obg.